A 113-amino-acid chain; its full sequence is ATP-dependent Clp protease adapter protein ClpS (113 aa).

Over residues 1-11 the composition is skewed to basic and acidic residues; the sequence is MHRDLHMMSDR. The segment at 1–25 is disordered; that stretch reads MHRDLHMMSDRSEDDGDTSILTATK.

Belongs to the ClpS family. Binds to the N-terminal domain of the chaperone ClpA.

In terms of biological role, involved in the modulation of the specificity of the ClpAP-mediated ATP-dependent protein degradation. The protein is ATP-dependent Clp protease adapter protein ClpS of Roseobacter denitrificans (strain ATCC 33942 / OCh 114) (Erythrobacter sp. (strain OCh 114)).